Consider the following 152-residue polypeptide: Transcriptional repressor NrdR (152 aa).

Residues 3-34 (CPYCQHPDSDVIDTRKLHNGETIRRRRKCEAC) fold into a zinc finger. Residues 49–139 (ITVVKKNGER…VYRSFADIGK (91 aa)) enclose the ATP-cone domain.

The protein belongs to the NrdR family. The cofactor is Zn(2+).

In terms of biological role, negatively regulates transcription of bacterial ribonucleotide reductase nrd genes and operons by binding to NrdR-boxes. This is Transcriptional repressor NrdR from Roseiflexus sp. (strain RS-1).